A 453-amino-acid polypeptide reads, in one-letter code: MTTDTIVAQATAPGRGGVGIIRISGDKATDVAMAVLGHLPKPRYADYCDFKNASGQVIDQGIALYFKGPNSFTGEDVLELQGHGGQIVLDMLIKRVLEVEGIRIAKPGEFSEQAFMNDKLDLTQAEAIADLIDATSEQAAKSALQSLQGEFSKEVHELVDQVTHLRLYVEAAIDFPDEEVDFLSDGKIANALYKIIDKLSVVQASAKQGSIIREGMKVVIAGRPNAGKSSLLNALAGKESAIVTEIAGTTRDVLREHIHLDGMPLHIIDTAGLRDTTDTVEQIGIERAWNEINSADRVLFMVDGTTTDAVDPHDIWPDFINRLPANLGVTVVRNKADLTGENLAMTEEKGYSVYRISAKTGLGVEELKQHLKSLMGYQSNLEGGFIARRRHLEALDIAASHLQLGKEQLEIYLAGELLAEELRMAQLALSEITGRFTSDDLLGKIFSSFCIGK.

(6S)-5-formyl-5,6,7,8-tetrahydrofolate-binding residues include arginine 22, glutamate 79, and lysine 119. The region spanning 215–376 (GMKVVIAGRP…LKQHLKSLMG (162 aa)) is the TrmE-type G domain. Asparagine 225 serves as a coordination point for K(+). GTP is bound by residues 225–230 (NAGKSS), 244–250 (TEIAGTT), 269–272 (DTAG), and 334–337 (NKAD). Serine 229 lines the Mg(2+) pocket. K(+)-binding residues include threonine 244, isoleucine 246, and threonine 249. Residue threonine 250 coordinates Mg(2+). Lysine 453 lines the (6S)-5-formyl-5,6,7,8-tetrahydrofolate pocket.

The protein belongs to the TRAFAC class TrmE-Era-EngA-EngB-Septin-like GTPase superfamily. TrmE GTPase family. Homodimer. Heterotetramer of two MnmE and two MnmG subunits. Requires K(+) as cofactor.

The protein resides in the cytoplasm. Exhibits a very high intrinsic GTPase hydrolysis rate. Involved in the addition of a carboxymethylaminomethyl (cmnm) group at the wobble position (U34) of certain tRNAs, forming tRNA-cmnm(5)s(2)U34. This chain is tRNA modification GTPase MnmE, found in Shewanella sp. (strain MR-7).